We begin with the raw amino-acid sequence, 361 residues long: tRNA pseudouridine synthase D (361 aa).

The active-site Nucleophile is Asp-76. Positions 151-318 constitute a TRUD domain; sequence GIPNYFGYQR…EQGSRRLAWI (168 aa).

This sequence belongs to the pseudouridine synthase TruD family.

The catalysed reaction is uridine(13) in tRNA = pseudouridine(13) in tRNA. In terms of biological role, responsible for synthesis of pseudouridine from uracil-13 in transfer RNAs. This Wolinella succinogenes (strain ATCC 29543 / DSM 1740 / CCUG 13145 / JCM 31913 / LMG 7466 / NCTC 11488 / FDC 602W) (Vibrio succinogenes) protein is tRNA pseudouridine synthase D.